Consider the following 2390-residue polypeptide: Spectrin beta chain, non-erythrocytic 2 (2390 aa).

Position 2 is an N-acetylserine (serine 2). The tract at residues 2 to 278 is actin-binding; that stretch reads SSTLSPTDFD…IITYVATYYH (277 aa). Residues serine 6 and serine 31 each carry the phosphoserine modification. Calponin-homology (CH) domains lie at 57–161 and 176–281; these read AVQK…LRFQ and KSAK…HYFS. Spectrin repeat units lie at residues 306-414, 427-527, 532-639, 642-744, 749-849, and 855-954; these read LVEK…LALR, AARF…RERL, ELQK…RLEE, RLWR…QRLA, LYQF…RALE, and YTML…KAAL. Residue serine 959 is modified to Phosphoserine. Spectrin repeat units follow at residues 960–1063, 1066–1169, 1174–1262, 1279–1379, 1384–1485, 1489–1586, 1589–1692, 1696–1797, 1801–1904, 1910–2010, and 2017–2076; these read IQNY…SLGE, RLQD…GRLA, FQGF…RHKK, EQQH…ARSL, RAEL…RRLQ, EQHQ…RLED, RAQQ…RLQE, LCQL…GQVL, YELQ…QLLL, FRFF…DWLQ, and VFGR…EKLT. Serine 1073 carries the post-translational modification Phosphoserine. Over residues 2081–2096 the composition is skewed to basic and acidic residues; that stretch reads REKERKRKREEEERRK. Disordered stretches follow at residues 2081–2222 and 2331–2390; these read REKE…EQME and SSAS…KKNK. The span at 2116 to 2125 shows a compositional bias: polar residues; it reads QTASDTTWDG. A phosphoserine mark is found at serine 2171 and serine 2199. The region spanning 2218 to 2328 is the PH domain; that stretch reads QEQMEGMLCR…WLRVVNAAIA (111 aa). Threonine 2354 carries the post-translational modification Phosphothreonine. Serine 2359 is subject to Phosphoserine. The span at 2370-2383 shows a compositional bias: basic and acidic residues; that stretch reads RSKDGREREREKRF.

This sequence belongs to the spectrin family. As to expression, highly expressed in brain, kidney, pancreas, and liver, and at lower levels in lung and placenta.

The protein resides in the cytoplasm. It is found in the cytoskeleton. It localises to the cell cortex. Probably plays an important role in neuronal membrane skeleton. This Homo sapiens (Human) protein is Spectrin beta chain, non-erythrocytic 2 (SPTBN2).